The following is a 160-amino-acid chain: Ribosomal RNA large subunit methyltransferase H (160 aa).

Residues L76 and G108 each coordinate S-adenosyl-L-methionine.

Belongs to the RNA methyltransferase RlmH family. As to quaternary structure, homodimer.

The protein resides in the cytoplasm. It catalyses the reaction pseudouridine(1915) in 23S rRNA + S-adenosyl-L-methionine = N(3)-methylpseudouridine(1915) in 23S rRNA + S-adenosyl-L-homocysteine + H(+). Its function is as follows. Specifically methylates the pseudouridine at position 1915 (m3Psi1915) in 23S rRNA. This is Ribosomal RNA large subunit methyltransferase H from Rhodopseudomonas palustris (strain TIE-1).